Consider the following 360-residue polypeptide: UDP-N-acetylglucosamine--N-acetylmuramyl-(pentapeptide) pyrophosphoryl-undecaprenol N-acetylglucosamine transferase (360 aa).

Residues Thr-12–Gly-14, Ser-198, and Gln-289 contribute to the UDP-N-acetyl-alpha-D-glucosamine site.

It belongs to the glycosyltransferase 28 family. MurG subfamily.

The protein resides in the cell membrane. The enzyme catalyses Mur2Ac(oyl-L-Ala-gamma-D-Glu-L-Lys-D-Ala-D-Ala)-di-trans,octa-cis-undecaprenyl diphosphate + UDP-N-acetyl-alpha-D-glucosamine = beta-D-GlcNAc-(1-&gt;4)-Mur2Ac(oyl-L-Ala-gamma-D-Glu-L-Lys-D-Ala-D-Ala)-di-trans,octa-cis-undecaprenyl diphosphate + UDP + H(+). Its pathway is cell wall biogenesis; peptidoglycan biosynthesis. Its function is as follows. Cell wall formation. Catalyzes the transfer of a GlcNAc subunit on undecaprenyl-pyrophosphoryl-MurNAc-pentapeptide (lipid intermediate I) to form undecaprenyl-pyrophosphoryl-MurNAc-(pentapeptide)GlcNAc (lipid intermediate II). This is UDP-N-acetylglucosamine--N-acetylmuramyl-(pentapeptide) pyrophosphoryl-undecaprenol N-acetylglucosamine transferase from Streptococcus equi subsp. zooepidemicus (strain MGCS10565).